The primary structure comprises 452 residues: MNRQLVNILTALFAFFLGTNHFREAFCKDHDSRSGKHPSQTLSPSDFLDKLMGRTSGYDARIRPNFKGPPVNVTCNIFINSFGSVTETTMDYRVNIFLRQQWNDSRLAYSEYPDDSLDLDPSMLDSIWKPDLFFANEKGANFHDVTTDNKLLRISKNGKVLYSIRLTLTLSCPMDLKNFPMDVQTCTMQLESFEYTMNDLIFEWLSDGPVQVAEGLTLPQFILKEEKELGYCTKHYNTGKFTCIEVKFHLERQMGYYLIQMYIPSLLIVILSWVSFWINMDAAPARVALGITTVLTMTTQSSGSRASLPKVSYVKAIDIWMAVCLLFVFAALLEYAAVNFVSRQHKEFLRLRRRQKRQNKEEDVTRESRFNFSGYGMGHCLQVKDGTAVKATPANPLPQPPKDADAIKKKFVDRAKRIDTISRAAFPLAFLIFNIFYWITYKIIRHEDVHKK.

The first 27 residues, 1 to 27, serve as a signal peptide directing secretion; it reads MNRQLVNILTALFAFFLGTNHFREAFC. The Extracellular segment spans residues 28-256; the sequence is KDHDSRSGKH…KFHLERQMGY (229 aa). Asparagine 72 carries N-linked (GlcNAc...) asparagine glycosylation. Arginine 99 is a glycine binding site. Residue arginine 99 participates in strychnine binding. N-linked (GlcNAc...) asparagine glycosylation occurs at asparagine 103. Glycine is bound at residue serine 163. Cysteine 172 and cysteine 186 are disulfide-bonded. Zn(2+) is bound by residues glutamate 226 and glutamate 228. Cysteine 232 and cysteine 243 are disulfide-bonded. Glycine is bound at residue threonine 238. Histidine 249 serves as a coordination point for Zn(2+). The helical transmembrane segment at 257–278 threads the bilayer; it reads YLIQMYIPSLLIVILSWVSFWI. At 279–283 the chain is on the cytoplasmic side; that stretch reads NMDAA. A helical transmembrane segment spans residues 284 to 304; the sequence is PARVALGITTVLTMTTQSSGS. Residues 305–315 are Extracellular-facing; it reads RASLPKVSYVK. Residues 316–336 traverse the membrane as a helical segment; sequence AIDIWMAVCLLFVFAALLEYA. The Cytoplasmic segment spans residues 337 to 420; the sequence is AVNFVSRQHK…FVDRAKRIDT (84 aa). Residues 421 to 441 traverse the membrane as a helical segment; sequence ISRAAFPLAFLIFNIFYWITY. The Extracellular segment spans residues 442–452; that stretch reads KIIRHEDVHKK.

This sequence belongs to the ligand-gated ion channel (TC 1.A.9) family. Glycine receptor (TC 1.A.9.3) subfamily. GLRA2 sub-subfamily. Interacts with GLRB. Heteropentamer composed of GLRA2 and GLRB; functional GLRB-GLRA2 heteropentamers contain four GLRA2 subunits and one GLRB subunit, although alternative subunit composition cannot be excluded. Homopentamer (in vitro). Both homopentamers and heteropentamers form functional ion channels, but their characteristics are subtly different.

It localises to the postsynaptic cell membrane. The protein localises to the synapse. The protein resides in the cell membrane. Its subcellular location is the cell projection. It carries out the reaction chloride(in) = chloride(out). With respect to regulation, channel opening is triggered by extracellular glycine. Channel opening is also triggered by taurine and beta-alanine. Inhibited by strychnine. Inhibited by picrotoxin. Subunit of heteromeric glycine-gated chloride channels. Plays a role in synaptic plasticity. Contributes to the generation of inhibitory postsynaptic currents, and is involved in the down-regulation of neuronal excitability. Plays a role in cellular responses to ethanol. The chain is Glycine receptor subunit alpha-2 from Rattus norvegicus (Rat).